A 441-amino-acid polypeptide reads, in one-letter code: Probable carboxypeptidase NFIA_052450 (441 aa).

The N-terminal stretch at 1-16 is a signal peptide; sequence MKPLSSLLLSAALSAA. N-linked (GlcNAc...) asparagine glycosylation is found at Asn88 and Asn150. A Zn(2+)-binding site is contributed by Asp166. The active-site Proton acceptor is Glu198. A Zn(2+)-binding site is contributed by Glu199. N-linked (GlcNAc...) asparagine glycans are attached at residues Asn354 and Asn373.

Belongs to the peptidase M20A family. Requires Zn(2+) as cofactor.

It is found in the secreted. The protein is Probable carboxypeptidase NFIA_052450 of Neosartorya fischeri (strain ATCC 1020 / DSM 3700 / CBS 544.65 / FGSC A1164 / JCM 1740 / NRRL 181 / WB 181) (Aspergillus fischerianus).